Reading from the N-terminus, the 215-residue chain is Protein GrpE (215 aa).

Polar residues predominate over residues 1-28; the sequence is MKHTSDTPSNSDMPSDSQATQPNASATG. Residues 1–52 are disordered; sequence MKHTSDTPSNSDMPSDSQATQPNASATGQAAHAYSSQAQRASADAQAVAGDE. A compositionally biased stretch (low complexity) spans 29–52; the sequence is QAAHAYSSQAQRASADAQAVAGDE.

This sequence belongs to the GrpE family. In terms of assembly, homodimer.

The protein resides in the cytoplasm. In terms of biological role, participates actively in the response to hyperosmotic and heat shock by preventing the aggregation of stress-denatured proteins, in association with DnaK and GrpE. It is the nucleotide exchange factor for DnaK and may function as a thermosensor. Unfolded proteins bind initially to DnaJ; upon interaction with the DnaJ-bound protein, DnaK hydrolyzes its bound ATP, resulting in the formation of a stable complex. GrpE releases ADP from DnaK; ATP binding to DnaK triggers the release of the substrate protein, thus completing the reaction cycle. Several rounds of ATP-dependent interactions between DnaJ, DnaK and GrpE are required for fully efficient folding. This Ralstonia pickettii (strain 12J) protein is Protein GrpE.